The sequence spans 433 residues: Methylenetetrahydrofolate--tRNA-(uracil-5-)-methyltransferase TrmFO (433 aa).

7–12 contacts FAD; sequence GGGLAG.

Belongs to the MnmG family. TrmFO subfamily. It depends on FAD as a cofactor.

The protein localises to the cytoplasm. It catalyses the reaction uridine(54) in tRNA + (6R)-5,10-methylene-5,6,7,8-tetrahydrofolate + NADH + H(+) = 5-methyluridine(54) in tRNA + (6S)-5,6,7,8-tetrahydrofolate + NAD(+). The enzyme catalyses uridine(54) in tRNA + (6R)-5,10-methylene-5,6,7,8-tetrahydrofolate + NADPH + H(+) = 5-methyluridine(54) in tRNA + (6S)-5,6,7,8-tetrahydrofolate + NADP(+). Its function is as follows. Catalyzes the folate-dependent formation of 5-methyl-uridine at position 54 (M-5-U54) in all tRNAs. This Natranaerobius thermophilus (strain ATCC BAA-1301 / DSM 18059 / JW/NM-WN-LF) protein is Methylenetetrahydrofolate--tRNA-(uracil-5-)-methyltransferase TrmFO.